Consider the following 78-residue polypeptide: D-alanyl carrier protein (78 aa).

Residues 1 to 78 (MDFNQEVLSV…QIIKQLNELR (78 aa)) form the Carrier domain. Serine 36 carries the post-translational modification O-(pantetheine 4'-phosphoryl)serine.

Belongs to the DltC family. 4'-phosphopantetheine is transferred from CoA to a specific serine of apo-DCP.

It is found in the cytoplasm. It participates in cell wall biogenesis; lipoteichoic acid biosynthesis. In terms of biological role, carrier protein involved in the D-alanylation of lipoteichoic acid (LTA). The loading of thioester-linked D-alanine onto DltC is catalyzed by D-alanine--D-alanyl carrier protein ligase DltA. The DltC-carried D-alanyl group is further transferred to cell membrane phosphatidylglycerol (PG) by forming an ester bond, probably catalyzed by DltD. D-alanylation of LTA plays an important role in modulating the properties of the cell wall in Gram-positive bacteria, influencing the net charge of the cell wall. This chain is D-alanyl carrier protein, found in Bacillus licheniformis (strain ATCC 14580 / DSM 13 / JCM 2505 / CCUG 7422 / NBRC 12200 / NCIMB 9375 / NCTC 10341 / NRRL NRS-1264 / Gibson 46).